Consider the following 411-residue polypeptide: Aspartate kinase (411 aa).

An ACT domain is found at 265–348 (LTIRGVPDTP…KIAKVSIVGV (84 aa)).

Belongs to the aspartokinase family.

It localises to the cytoplasm. The enzyme catalyses L-aspartate + ATP = 4-phospho-L-aspartate + ADP. The protein operates within amino-acid biosynthesis; L-lysine biosynthesis via DAP pathway; (S)-tetrahydrodipicolinate from L-aspartate: step 1/4. It functions in the pathway amino-acid biosynthesis; L-methionine biosynthesis via de novo pathway; L-homoserine from L-aspartate: step 1/3. Its pathway is amino-acid biosynthesis; L-threonine biosynthesis; L-threonine from L-aspartate: step 1/5. With respect to regulation, allosterically feedback inhibited by L-lysine and L-threonine individually and also subject to a concerted feedback inhibition by these amino acids. In terms of biological role, involved in the biosynthesis of L-aspartate-beta-semialdehyde which is a central intermediate in the biosynthesis of different amino acids (L-lysine, L-methionine, L-threonine). Catalyzes the phosphorylation of the beta-carboxyl group of L-aspartate to yield 4-phospho-L-aspartate. The sequence is that of Aspartate kinase from Pseudomonas putida (strain ATCC 47054 / DSM 6125 / CFBP 8728 / NCIMB 11950 / KT2440).